A 59-amino-acid chain; its full sequence is Large ribosomal subunit protein uL30 (59 aa).

Belongs to the universal ribosomal protein uL30 family. In terms of assembly, part of the 50S ribosomal subunit.

This is Large ribosomal subunit protein uL30 from Staphylococcus epidermidis (strain ATCC 12228 / FDA PCI 1200).